The chain runs to 147 residues: Large ribosomal subunit protein uL13 (147 aa).

It belongs to the universal ribosomal protein uL13 family. In terms of assembly, part of the 50S ribosomal subunit.

Functionally, this protein is one of the early assembly proteins of the 50S ribosomal subunit, although it is not seen to bind rRNA by itself. It is important during the early stages of 50S assembly. The chain is Large ribosomal subunit protein uL13 from Beutenbergia cavernae (strain ATCC BAA-8 / DSM 12333 / CCUG 43141 / JCM 11478 / NBRC 16432 / NCIMB 13614 / HKI 0122).